Reading from the N-terminus, the 174-residue chain is Gamma-crystallin C (174 aa).

Beta/gamma crystallin 'Greek key' domains are found at residues 2 to 40 (GKIT…RVDS) and 41 to 83 (GCWM…CLIP). Cys-23 bears the S-methylcysteine mark. A connecting peptide region spans residues 84–87 (QTSS). 2 Beta/gamma crystallin 'Greek key' domains span residues 88-128 (HRLR…HVLE) and 129-171 (GCWV…RRVV).

Belongs to the beta/gamma-crystallin family. Monomer.

Its function is as follows. Crystallins are the dominant structural components of the vertebrate eye lens. The polypeptide is Gamma-crystallin C (CRYGC) (Canis lupus familiaris (Dog)).